The sequence spans 423 residues: Glutamyl-tRNA(Gln) amidotransferase subunit A (423 aa).

Catalysis depends on charge relay system residues Lys28 and Ser103. Ser127 functions as the Acyl-ester intermediate in the catalytic mechanism.

Belongs to the amidase family. GatA subfamily. Heterotrimer of A, B and C subunits.

The catalysed reaction is L-glutamyl-tRNA(Gln) + L-glutamine + ATP + H2O = L-glutaminyl-tRNA(Gln) + L-glutamate + ADP + phosphate + H(+). Its function is as follows. Allows the formation of correctly charged Gln-tRNA(Gln) through the transamidation of misacylated Glu-tRNA(Gln) in organisms which lack glutaminyl-tRNA synthetase. The reaction takes place in the presence of glutamine and ATP through an activated gamma-phospho-Glu-tRNA(Gln). This is Glutamyl-tRNA(Gln) amidotransferase subunit A from Halobacterium salinarum (strain ATCC 700922 / JCM 11081 / NRC-1) (Halobacterium halobium).